A 209-amino-acid polypeptide reads, in one-letter code: uncharacterized protein (209 aa).

Residues 1 to 11 are compositionally biased toward basic and acidic residues; it reads MMRTNAGKETK. Residues 1–20 are disordered; the sequence is MMRTNAGKETKGYNPAPADS.

This is an uncharacterized protein from Caenorhabditis elegans.